Consider the following 374-residue polypeptide: Mannitol-1-phosphate 5-dehydrogenase (374 aa).

An NAD(+)-binding site is contributed by 3–14; that stretch reads AIHFGAGNIGRG.

It belongs to the mannitol dehydrogenase family.

The catalysed reaction is D-mannitol 1-phosphate + NAD(+) = beta-D-fructose 6-phosphate + NADH + H(+). This is Mannitol-1-phosphate 5-dehydrogenase from Halalkalibacterium halodurans (strain ATCC BAA-125 / DSM 18197 / FERM 7344 / JCM 9153 / C-125) (Bacillus halodurans).